Here is a 250-residue protein sequence, read N- to C-terminus: Histone H1.3 (250 aa).

Disordered regions lie at residues 17–53 and 104–250; these read AASGEKKVSTKKAAATPKSKKSTAAPPSHPPTQQMVD and QTKG…ATKK. Over residues 27–42 the composition is skewed to low complexity; sequence KKAAATPKSKKSTAAP. The region spanning 44 to 118 is the H15 domain; sequence SHPPTQQMVD…GASGSFKLSR (75 aa). Residues 120–133 show a composition bias toward basic and acidic residues; it reads AKKDAKPKASAVEK. The span at 138 to 161 shows a compositional bias: low complexity; the sequence is VNASAAAATKRSSSTSTTKKAAGA. Basic and acidic residues predominate over residues 174–191; the sequence is KNVEKKKADKEKAKDAKK. A compositionally biased stretch (low complexity) spans 192-234; that stretch reads TGTIKAKLTTAKAKSSATKPKTPKPKTTSAKPKKVVSATTPKK. Residues 235-250 show a composition bias toward basic residues; it reads TAVKKPKAKTASATKK.

The protein belongs to the histone H1/H5 family.

Its subcellular location is the nucleus. It localises to the chromosome. In terms of biological role, histones H1 are necessary for the condensation of nucleosome chains into higher-order structures. In Drosophila virilis (Fruit fly), this protein is Histone H1.3 (His1.3).